The sequence spans 380 residues: Glutamate 5-kinase (380 aa).

Residue Lys-15 coordinates ATP. Substrate-binding residues include Ser-59, Asp-146, and Asn-158. 178–179 (TD) contacts ATP. Residues 285-363 (RGSVTVDAGA…AEFERLLGYA (79 aa)) form the PUA domain.

It belongs to the glutamate 5-kinase family.

It is found in the cytoplasm. It catalyses the reaction L-glutamate + ATP = L-glutamyl 5-phosphate + ADP. Its pathway is amino-acid biosynthesis; L-proline biosynthesis; L-glutamate 5-semialdehyde from L-glutamate: step 1/2. Functionally, catalyzes the transfer of a phosphate group to glutamate to form L-glutamate 5-phosphate. The protein is Glutamate 5-kinase of Acidovorax ebreus (strain TPSY) (Diaphorobacter sp. (strain TPSY)).